A 654-amino-acid polypeptide reads, in one-letter code: tRNA 5-methylaminomethyl-2-thiouridine biosynthesis bifunctional protein MnmC (654 aa).

The segment at 1–236 (MSTLLQHAQI…KWEVMSGAYV (236 aa)) is tRNA (mnm(5)s(2)U34)-methyltransferase. An FAD-dependent cmnm(5)s(2)U34 oxidoreductase region spans residues 262-654 (IGAGLAGSTT…FALRRLIRGK (393 aa)).

The protein in the N-terminal section; belongs to the methyltransferase superfamily. tRNA (mnm(5)s(2)U34)-methyltransferase family. In the C-terminal section; belongs to the DAO family. It depends on FAD as a cofactor.

It localises to the cytoplasm. It carries out the reaction 5-aminomethyl-2-thiouridine(34) in tRNA + S-adenosyl-L-methionine = 5-methylaminomethyl-2-thiouridine(34) in tRNA + S-adenosyl-L-homocysteine + H(+). Its function is as follows. Catalyzes the last two steps in the biosynthesis of 5-methylaminomethyl-2-thiouridine (mnm(5)s(2)U) at the wobble position (U34) in tRNA. Catalyzes the FAD-dependent demodification of cmnm(5)s(2)U34 to nm(5)s(2)U34, followed by the transfer of a methyl group from S-adenosyl-L-methionine to nm(5)s(2)U34, to form mnm(5)s(2)U34. This chain is tRNA 5-methylaminomethyl-2-thiouridine biosynthesis bifunctional protein MnmC, found in Pseudomonas putida (strain GB-1).